Reading from the N-terminus, the 362-residue chain is UDP-N-acetylglucosamine--N-acetylmuramyl-(pentapeptide) pyrophosphoryl-undecaprenol N-acetylglucosamine transferase (362 aa).

UDP-N-acetyl-alpha-D-glucosamine contacts are provided by residues Thr-14–Gly-16, Asn-126, Arg-166, Ser-193, and Gln-294.

It belongs to the glycosyltransferase 28 family. MurG subfamily.

The protein resides in the cell inner membrane. It catalyses the reaction di-trans,octa-cis-undecaprenyl diphospho-N-acetyl-alpha-D-muramoyl-L-alanyl-D-glutamyl-meso-2,6-diaminopimeloyl-D-alanyl-D-alanine + UDP-N-acetyl-alpha-D-glucosamine = di-trans,octa-cis-undecaprenyl diphospho-[N-acetyl-alpha-D-glucosaminyl-(1-&gt;4)]-N-acetyl-alpha-D-muramoyl-L-alanyl-D-glutamyl-meso-2,6-diaminopimeloyl-D-alanyl-D-alanine + UDP + H(+). It participates in cell wall biogenesis; peptidoglycan biosynthesis. Its function is as follows. Cell wall formation. Catalyzes the transfer of a GlcNAc subunit on undecaprenyl-pyrophosphoryl-MurNAc-pentapeptide (lipid intermediate I) to form undecaprenyl-pyrophosphoryl-MurNAc-(pentapeptide)GlcNAc (lipid intermediate II). The chain is UDP-N-acetylglucosamine--N-acetylmuramyl-(pentapeptide) pyrophosphoryl-undecaprenol N-acetylglucosamine transferase from Paracoccus denitrificans (strain Pd 1222).